Reading from the N-terminus, the 582-residue chain is Cryptochrome-2 (582 aa).

Positions 12–141 (CRSVHWFRRG…EVVIENSHTL (130 aa)) constitute a Photolyase/cryptochrome alpha/beta domain. FAD-binding positions include serine 261, glutamine 298, histidine 364, and 396–398 (DAD). A disordered region spans residues 521-559 (GPVTDSAPGQGSSTSTAVRLPQSDQASPKRKHEGAEELC). Positions 527 to 546 (APGQGSSTSTAVRLPQSDQA) are enriched in polar residues.

Belongs to the DNA photolyase class-1 family. In terms of assembly, component of the circadian core oscillator, which includes the CRY proteins, CLOCK or NPAS2, BMAL1 or BMAL2, CSNK1E, and the PER proteins. FAD serves as cofactor. The cofactor is (6R)-5,10-methylene-5,6,7,8-tetrahydrofolate. As to expression, expressed in the pineal gland.

It localises to the cytoplasm. The protein localises to the nucleus. Transcriptional repressor which forms a core component of the circadian clock. The circadian clock, an internal time-keeping system, regulates various physiological processes through the generation of approximately 24 hour circadian rhythms in gene expression, which are translated into rhythms in metabolism and behavior. It is derived from the Latin roots 'circa' (about) and 'diem' (day) and acts as an important regulator of a wide array of physiological functions including metabolism, sleep, body temperature, blood pressure, endocrine, immune, cardiovascular, and renal function. Consists of two major components: the central clock, residing in the suprachiasmatic nucleus (SCN) of the brain, and the peripheral clocks that are present in nearly every tissue and organ system. Both the central and peripheral clocks can be reset by environmental cues, also known as Zeitgebers (German for 'timegivers'). The predominant Zeitgeber for the central clock is light, which is sensed by retina and signals directly to the SCN. The central clock entrains the peripheral clocks through neuronal and hormonal signals, body temperature and feeding-related cues, aligning all clocks with the external light/dark cycle. Circadian rhythms allow an organism to achieve temporal homeostasis with its environment at the molecular level by regulating gene expression to create a peak of protein expression once every 24 hours to control when a particular physiological process is most active with respect to the solar day. Transcription and translation of core clock components (CLOCK, NPAS2, BMAL1, BMAL2, PER1, PER2, PER3, CRY1 and CRY2) plays a critical role in rhythm generation, whereas delays imposed by post-translational modifications (PTMs) are important for determining the period (tau) of the rhythms (tau refers to the period of a rhythm and is the length, in time, of one complete cycle). A diurnal rhythm is synchronized with the day/night cycle, while the ultradian and infradian rhythms have a period shorter and longer than 24 hours, respectively. Disruptions in the circadian rhythms contribute to the pathology of cardiovascular diseases, cancer, metabolic syndromes and aging. A transcription/translation feedback loop (TTFL) forms the core of the molecular circadian clock mechanism. Transcription factors, CLOCK or NPAS2 and BMAL1 or BMAL2, form the positive limb of the feedback loop, act in the form of a heterodimer and activate the transcription of core clock genes and clock-controlled genes (involved in key metabolic processes), harboring E-box elements (5'-CACGTG-3') within their promoters. The core clock genes: PER1/2/3 and CRY1/2 which are transcriptional repressors form the negative limb of the feedback loop and interact with the CLOCK|NPAS2-BMAL1|BMAL2 heterodimer inhibiting its activity and thereby negatively regulating their own expression. This heterodimer also activates nuclear receptors NR1D1/2, RORA/B/G, which form a second feedback loop and which activate and repress BMAL1 transcription, respectively. CRY1 and CRY2 have redundant functions but also differential and selective contributions at least in defining the pace of the SCN circadian clock and its circadian transcriptional outputs. Less potent transcriptional repressor in cerebellum and liver than CRY1, though less effective in lengthening the period of the SCN oscillator. Seems to play a critical role in tuning SCN circadian period by opposing the action of CRY1. With CRY1, dispensable for circadian rhythm generation but necessary for the development of intercellular networks for rhythm synchrony. Represses CLOCK-BMAL1-mediated transcriptional activation. The sequence is that of Cryptochrome-2 (CRY2) from Gallus gallus (Chicken).